A 418-amino-acid chain; its full sequence is uncharacterized protein (418 aa).

This is an uncharacterized protein from Ictalurid herpesvirus 1 (strain Auburn) (IcHV-1).